A 102-amino-acid polypeptide reads, in one-letter code: P antigen family member 4 (102 aa).

The segment covering 1 to 10 (MSARVRSRSR) has biased composition (basic residues). The interval 1–102 (MSARVRSRSR…KTKEAGDGQP (102 aa)) is disordered. Residue Ser-7 is modified to Phosphoserine; by CLK2. A Phosphoserine; by HIPK1 and CLK2 modification is found at Ser-9. Residues 45 to 85 (GQEREGTPPIEERKVEGDCQEMDLEKTRSERGDGSDVKEKT) show a composition bias toward basic and acidic residues. Thr-51 carries the post-translational modification Phosphothreonine; by HIPK1 and CLK2. Residue Thr-71 is modified to Phosphothreonine; by CLK2. Ser-73 and Ser-79 each carry phosphoserine; by CLK2. Thr-85 and Thr-94 each carry phosphothreonine; by CLK2.

This sequence belongs to the GAGE family. As to quaternary structure, interacts with JUN. In terms of processing, HIPK1-mediated phosphorylation at Thr-51 leads to the compaction of its intrinsically disordered conformation and is critical for its ability to potentiate the transcriptional activator activity of JUN inspite of a reduced interaction with JUN. CLK2-mediated phosphorylation at multiple Ser and Thr residues attenuates its ability to potentiate JUN transcriptional activator activity. Expressed at basal lvels in the adult normal prostate gland but is highly up-regulated in the fetal prostate and prostate cancer cells. Preferentially expressed in normal male and female reproductive tissues, testis, fallopian tube, uterus, and placenta, as well as in testicular cancer, uterine cancer, cervical cancer and kidney cancer.

It is found in the cytoplasm. The protein localises to the nucleus. Its subcellular location is the mitochondrion. In terms of biological role, intrinsically disordered protein that potentiates the transcriptional activator activity of JUN. Protects cells from stress-induced apoptosis by inhibiting reactive oxygen species (ROS) production and via regulation of the MAPK signaling pathway. This is P antigen family member 4 (PAGE4) from Homo sapiens (Human).